Here is a 79-residue protein sequence, read N- to C-terminus: D-alanyl carrier protein (79 aa).

The Carrier domain occupies 1–77; the sequence is MDVKAEVIEI…KIVEGVTELR (77 aa). Serine 35 bears the O-(pantetheine 4'-phosphoryl)serine mark.

It belongs to the DltC family. 4'-phosphopantetheine is transferred from CoA to a specific serine of apo-DCP.

Its subcellular location is the cytoplasm. Its pathway is cell wall biogenesis; lipoteichoic acid biosynthesis. In terms of biological role, carrier protein involved in the D-alanylation of lipoteichoic acid (LTA). The loading of thioester-linked D-alanine onto DltC is catalyzed by D-alanine--D-alanyl carrier protein ligase DltA. The DltC-carried D-alanyl group is further transferred to cell membrane phosphatidylglycerol (PG) by forming an ester bond, probably catalyzed by DltD. D-alanylation of LTA plays an important role in modulating the properties of the cell wall in Gram-positive bacteria, influencing the net charge of the cell wall. The chain is D-alanyl carrier protein from Streptococcus gordonii (strain Challis / ATCC 35105 / BCRC 15272 / CH1 / DL1 / V288).